The following is a 591-amino-acid chain: Lipoprotein LpqB (591 aa).

The N-terminal stretch at 1–20 (MTLRPSRRAVLSAAAVLLTG) is a signal peptide. The N-palmitoyl cysteine moiety is linked to residue cysteine 21. The S-diacylglycerol cysteine moiety is linked to residue cysteine 21.

This sequence belongs to the LpqB lipoprotein family.

The protein localises to the cell membrane. The polypeptide is Lipoprotein LpqB (Cutibacterium acnes (strain DSM 16379 / KPA171202) (Propionibacterium acnes)).